A 501-amino-acid chain; its full sequence is Bifunctional purine biosynthesis protein PurH (501 aa).

One can recognise an MGS-like domain in the interval 1-144; the sequence is MKKRALISVF…KNFQDVVVIS (144 aa).

The protein belongs to the PurH family.

It catalyses the reaction (6R)-10-formyltetrahydrofolate + 5-amino-1-(5-phospho-beta-D-ribosyl)imidazole-4-carboxamide = 5-formamido-1-(5-phospho-D-ribosyl)imidazole-4-carboxamide + (6S)-5,6,7,8-tetrahydrofolate. The catalysed reaction is IMP + H2O = 5-formamido-1-(5-phospho-D-ribosyl)imidazole-4-carboxamide. The protein operates within purine metabolism; IMP biosynthesis via de novo pathway; 5-formamido-1-(5-phospho-D-ribosyl)imidazole-4-carboxamide from 5-amino-1-(5-phospho-D-ribosyl)imidazole-4-carboxamide (10-formyl THF route): step 1/1. It participates in purine metabolism; IMP biosynthesis via de novo pathway; IMP from 5-formamido-1-(5-phospho-D-ribosyl)imidazole-4-carboxamide: step 1/1. The protein is Bifunctional purine biosynthesis protein PurH of Clostridium botulinum (strain Eklund 17B / Type B).